Reading from the N-terminus, the 158-residue chain is Glutathione peroxidase homolog BsaA (158 aa).

Cys36 is a catalytic residue.

The protein belongs to the glutathione peroxidase family.

The sequence is that of Glutathione peroxidase homolog BsaA (bsaA) from Staphylococcus epidermidis (strain ATCC 12228 / FDA PCI 1200).